We begin with the raw amino-acid sequence, 2238 residues long: RNA-directed RNA polymerase L (2238 aa).

The interval 26 to 284 (ITLVTCQNDA…THHSEHPVDC (259 aa)) is endonuclease. Positions 51, 89, and 102 each coordinate Mn(2+). The active site involves K115. Positions 1188 to 1387 (TDMKMCVNLG…FISTKFNKFV (200 aa)) constitute a RdRp catalytic domain. D1346 contributes to the Mg(2+) binding site.

The protein belongs to the Bunyavirales RNA polymerase family. Homomultimer; the oligomeric structure is essential for the polymerase activity. Interacts with nucleoprotein N. Interacts with protein Z; this interaction inhibits viral transcription and replication, Z partially blocks the product exit tunnel for the releasing nascent RNA product. Requires Mn(2+) as cofactor. Mg(2+) is required as a cofactor.

The protein localises to the virion. The protein resides in the host cytoplasm. It catalyses the reaction RNA(n) + a ribonucleoside 5'-triphosphate = RNA(n+1) + diphosphate. In terms of biological role, RNA-dependent RNA polymerase, which is responsible for the replication and transcription of the viral RNA genome using antigenomic RNA as an intermediate. During transcription, synthesizes subgenomic RNAs and assures their capping by a cap-snatching mechanism, which involves the endonuclease activity cleaving the host capped pre-mRNAs. These short capped RNAs are then used as primers for viral transcription. The 3'-end of subgenomic mRNAs molecules are heterogeneous and not polyadenylated. The replicase function is to direct synthesis of antigenomic and genomic RNA which are encapsidated and non capped. As a consequence of the use of the same enzyme for both transcription and replication, these mechanisms need to be well coordinated. These processes may be regulated by proteins N and Z in a dose-dependent manner. Z protein inhibits the viral polymerase L und thus the viral transcription and RNA synthesis. The sequence is that of RNA-directed RNA polymerase L from Calomys callosus (Large vesper mouse).